The chain runs to 292 residues: MSQDVNELSKQPTPDKAEDNAFFPSPYSLSQYTAPKTDFDGVEHKGAYKDGKWKVLMIAAEERYVLLENGKMFSTGNHPVEMLLPLHHLMEAGFDVDVATLSGYPVKLELWAMPTEDEAVISTYNKLKEKLKQPKKLADVIKNELGPDSDYLSVFIPGGHAAVVGISESEDVQQTLDWALDNDRFIVTLCHGPAALLSAGLNREKSPLEGYSVCVFPDSLDEGANIEIGYLPGRLKWLVADLLTKQGLKVVNDDMTGRTLKDRKLLTGDSPLASNELGKLAVNEMLNAIQNK.

The span at 1–12 (MSQDVNELSKQP) shows a compositional bias: polar residues. The tract at residues 1–23 (MSQDVNELSKQPTPDKAEDNAFF) is disordered. The active-site Nucleophile is the Cys-190.

Belongs to the peptidase C56 family. HchA subfamily.

The protein resides in the cytoplasm. It carries out the reaction N(omega)-(1-hydroxy-2-oxopropyl)-L-arginyl-[protein] + H2O = lactate + L-arginyl-[protein] + H(+). The enzyme catalyses N(6)-(1-hydroxy-2-oxopropyl)-L-lysyl-[protein] + H2O = lactate + L-lysyl-[protein] + H(+). The catalysed reaction is S-(1-hydroxy-2-oxopropyl)-L-cysteinyl-[protein] + H2O = lactate + L-cysteinyl-[protein] + H(+). It catalyses the reaction N(omega)-(1-hydroxy-2-oxoethyl)-L-arginyl-[protein] + H2O = L-arginyl-[protein] + glycolate + H(+). It carries out the reaction N(6)-(1-hydroxy-2-oxoethyl)-L-lysyl-[protein] + H2O = glycolate + L-lysyl-[protein] + H(+). The enzyme catalyses S-(1-hydroxy-2-oxoethyl)-L-cysteinyl-[protein] + H2O = glycolate + L-cysteinyl-[protein] + H(+). The catalysed reaction is N(2)-(1-hydroxy-2-oxopropyl)-dGTP + H2O = lactate + dGTP + H(+). It catalyses the reaction N(2)-(1-hydroxy-2-oxopropyl)-GTP + H2O = lactate + GTP + H(+). It carries out the reaction N(2)-(1-hydroxy-2-oxopropyl)-GDP + H2O = lactate + GDP + H(+). The enzyme catalyses N(2)-(1-hydroxy-2-oxopropyl)-GMP + H2O = lactate + GMP + H(+). The catalysed reaction is N(2)-(1-hydroxy-2-oxoethyl)-dGTP + H2O = dGTP + glycolate + H(+). It catalyses the reaction N(2)-(1-hydroxy-2-oxoethyl)-GTP + H2O = glycolate + GTP + H(+). It carries out the reaction N(2)-(1-hydroxy-2-oxoethyl)-GDP + H2O = glycolate + GDP + H(+). The enzyme catalyses N(2)-(1-hydroxy-2-oxoethyl)-GMP + H2O = glycolate + GMP + H(+). The catalysed reaction is an N(2)-(1-hydroxy-2-oxopropyl)-guanosine in RNA + H2O = a guanosine in RNA + lactate + H(+). It catalyses the reaction an N(2)-(1-hydroxy-2-oxopropyl)-2'-deoxyguanosine in DNA + H2O = a 2'-deoxyguanosine in DNA + lactate + H(+). It carries out the reaction an N(2)-(1-hydroxy-2-oxoethyl)-guanosine in RNA + H2O = a guanosine in RNA + glycolate + H(+). The enzyme catalyses an N(2)-(1-hydroxy-2-oxoethyl)-2'-deoxyguanosine in DNA + H2O = a 2'-deoxyguanosine in DNA + glycolate + H(+). In terms of biological role, protein and nucleotide deglycase that catalyzes the deglycation of the Maillard adducts formed between amino groups of proteins or nucleotides and reactive carbonyl groups of glyoxals. Thus, functions as a protein deglycase that repairs methylglyoxal- and glyoxal-glycated proteins, and releases repaired proteins and lactate or glycolate, respectively. Deglycates cysteine, arginine and lysine residues in proteins, and thus reactivates these proteins by reversing glycation by glyoxals. Acts on early glycation intermediates (hemithioacetals and aminocarbinols), preventing the formation of Schiff bases and advanced glycation endproducts (AGE). Also functions as a nucleotide deglycase able to repair glycated guanine in the free nucleotide pool (GTP, GDP, GMP, dGTP) and in DNA and RNA. Is thus involved in a major nucleotide repair system named guanine glycation repair (GG repair), dedicated to reversing methylglyoxal and glyoxal damage via nucleotide sanitization and direct nucleic acid repair. Plays an important role in protecting cells from carbonyl stress. The protein is Protein/nucleic acid deglycase HchA of Staphylococcus aureus (strain Mu3 / ATCC 700698).